Consider the following 543-residue polypeptide: Myotubularin-related protein 9-like (543 aa).

The region spanning 124–502 (AWHFHPPECY…QSLRLWQGLF (379 aa)) is the Myotubularin phosphatase domain.

It belongs to the protein-tyrosine phosphatase family. Non-receptor class myotubularin subfamily.

Its function is as follows. Probable pseudophosphatase. This chain is Myotubularin-related protein 9-like, found in Bos taurus (Bovine).